Here is a 356-residue protein sequence, read N- to C-terminus: Cytochrome c oxidase subunit 2 (356 aa).

The first 23 residues, 1-23 (MNKGLCNWRLFSLFGMMALLLAG), serve as a signal peptide directing secretion. The segment at 24 to 259 (CGKPFLSTLQ…QNAKKPVVTD (236 aa)) is cytochrome c oxidase subunit II. 2 helical membrane passes run 45-65 (LMLLSTSIMVLVIVVVAIIFV) and 93-113 (IIWTVIPIILLLILAVPTVLT). Cu cation contacts are provided by histidine 178, cysteine 219, cysteine 223, and histidine 227. The Cytochrome c domain maps to 260–356 (PVAKEGEAIF…TKYLMSLKVE (97 aa)). Heme c contacts are provided by cysteine 273, cysteine 276, histidine 277, and methionine 331.

The protein belongs to the cytochrome c oxidase subunit 2 family. Cu cation is required as a cofactor. It depends on heme c as a cofactor.

The protein localises to the cell membrane. It carries out the reaction 4 Fe(II)-[cytochrome c] + O2 + 8 H(+)(in) = 4 Fe(III)-[cytochrome c] + 2 H2O + 4 H(+)(out). Its function is as follows. Subunits I and II form the functional core of the enzyme complex. Electrons originating in cytochrome c are transferred via heme a and Cu(A) to the binuclear center formed by heme a3 and Cu(B). The chain is Cytochrome c oxidase subunit 2 (ctaC) from Bacillus sp. (strain PS3).